Reading from the N-terminus, the 158-residue chain is NAD(P)H-quinone oxidoreductase subunit J, chloroplastic (158 aa).

This sequence belongs to the complex I 30 kDa subunit family. NDH is composed of at least 16 different subunits, 5 of which are encoded in the nucleus.

It is found in the plastid. Its subcellular location is the chloroplast thylakoid membrane. The catalysed reaction is a plastoquinone + NADH + (n+1) H(+)(in) = a plastoquinol + NAD(+) + n H(+)(out). The enzyme catalyses a plastoquinone + NADPH + (n+1) H(+)(in) = a plastoquinol + NADP(+) + n H(+)(out). NDH shuttles electrons from NAD(P)H:plastoquinone, via FMN and iron-sulfur (Fe-S) centers, to quinones in the photosynthetic chain and possibly in a chloroplast respiratory chain. The immediate electron acceptor for the enzyme in this species is believed to be plastoquinone. Couples the redox reaction to proton translocation, and thus conserves the redox energy in a proton gradient. In Lotus japonicus (Lotus corniculatus var. japonicus), this protein is NAD(P)H-quinone oxidoreductase subunit J, chloroplastic.